Here is a 272-residue protein sequence, read N- to C-terminus: MLTIFAISDSIAETAHQVTLAVAAQFKEKIKIRRVPYIKTIDDVDCIFPEIAKIERKIIISTIITVDVREYLTKKCYEKNIYIMNVLGPLIDSISSMLNTNPEYKPGAMRQIDEIYYKRIEAMEFAMQYDDSKDYGGLKNADVVLIGLSRTSKTPLSMYLANKGVKAINIPLMPEIGVPDEIYTIDKKKIFGLKIDAFQLIEIRKKRLDKFHRISSSIEYAGDERILEELEYSDRIMKRLGCKTIDITQRAIEDTALIILESIGYNKNTNIY.

ADP is bound at residue 147–154 (GLSRTSKT).

The protein belongs to the pyruvate, phosphate/water dikinase regulatory protein family. PDRP subfamily.

It catalyses the reaction N(tele)-phospho-L-histidyl/L-threonyl-[pyruvate, phosphate dikinase] + ADP = N(tele)-phospho-L-histidyl/O-phospho-L-threonyl-[pyruvate, phosphate dikinase] + AMP + H(+). The enzyme catalyses N(tele)-phospho-L-histidyl/O-phospho-L-threonyl-[pyruvate, phosphate dikinase] + phosphate + H(+) = N(tele)-phospho-L-histidyl/L-threonyl-[pyruvate, phosphate dikinase] + diphosphate. Bifunctional serine/threonine kinase and phosphorylase involved in the regulation of the pyruvate, phosphate dikinase (PPDK) by catalyzing its phosphorylation/dephosphorylation. This chain is Putative pyruvate, phosphate dikinase regulatory protein, found in Clostridium botulinum (strain Alaska E43 / Type E3).